Here is a 431-residue protein sequence, read N- to C-terminus: Sulfide dehydrogenase [flavocytochrome c] flavoprotein chain (431 aa).

The segment at residues 1-30 is a signal peptide (tat-type signal); sequence MTLNRRDFIKTSGAAVAAVGILGFPHLAFG. 70–76 contacts FAD; that stretch reads YTCYLSN. A disulfide bridge connects residues Cys-191 and Cys-367.

As to quaternary structure, dimer of one cytochrome and one flavoprotein. In terms of processing, predicted to be exported by the Tat system. The position of the signal peptide cleavage has been experimentally proven.

The protein localises to the periplasm. The catalysed reaction is hydrogen sulfide + 2 Fe(III)-[cytochrome c] = sulfur + 2 Fe(II)-[cytochrome c] + H(+). This Allochromatium vinosum (strain ATCC 17899 / DSM 180 / NBRC 103801 / NCIMB 10441 / D) (Chromatium vinosum) protein is Sulfide dehydrogenase [flavocytochrome c] flavoprotein chain (fccB).